The primary structure comprises 251 residues: ATP synthase subunit a, chloroplastic (251 aa).

The next 6 membrane-spanning stretches (helical) occupy residues 3–23 (IVLLYYFVNMFISGIFQIANV), 38–58 (IHGQVLINSWIVILIIGFLSI), 99–119 (VPYIGTMFLFIFVSNWSGALI), 138–158 (INTTAGLAILTSLAYFYAGLN), 203–223 (LVVAVLVSLVPLIVPVPLIFL), and 224–244 (GLFTSGIQALIFATLSGSYIG).

It belongs to the ATPase A chain family. F-type ATPases have 2 components, CF(1) - the catalytic core - and CF(0) - the membrane proton channel. CF(1) has five subunits: alpha(3), beta(3), gamma(1), delta(1), epsilon(1). CF(0) has four main subunits: a, b, b' and c.

Its subcellular location is the plastid. The protein resides in the chloroplast thylakoid membrane. Key component of the proton channel; it plays a direct role in the translocation of protons across the membrane. The protein is ATP synthase subunit a, chloroplastic of Euglena gracilis.